The following is a 123-amino-acid chain: Large ribosomal subunit protein bL12 (123 aa).

Belongs to the bacterial ribosomal protein bL12 family. As to quaternary structure, homodimer. Part of the ribosomal stalk of the 50S ribosomal subunit. Forms a multimeric L10(L12)X complex, where L10 forms an elongated spine to which 2 to 4 L12 dimers bind in a sequential fashion. Binds GTP-bound translation factors.

Its function is as follows. Forms part of the ribosomal stalk which helps the ribosome interact with GTP-bound translation factors. Is thus essential for accurate translation. The chain is Large ribosomal subunit protein bL12 from Finegoldia magna (strain ATCC 29328 / DSM 20472 / WAL 2508) (Peptostreptococcus magnus).